We begin with the raw amino-acid sequence, 105 residues long: Small ribosomal subunit protein uS10 (105 aa).

It belongs to the universal ribosomal protein uS10 family. As to quaternary structure, part of the 30S ribosomal subunit.

Involved in the binding of tRNA to the ribosomes. This chain is Small ribosomal subunit protein uS10, found in Chlamydia muridarum (strain MoPn / Nigg).